Reading from the N-terminus, the 421-residue chain is Serine--tRNA ligase (421 aa).

Residue 232–234 (TAE) coordinates L-serine. 262–264 (RSE) contacts ATP. E285 is a binding site for L-serine. 349–352 (EVSS) serves as a coordination point for ATP. S384 lines the L-serine pocket.

Belongs to the class-II aminoacyl-tRNA synthetase family. Type-1 seryl-tRNA synthetase subfamily. Homodimer. The tRNA molecule binds across the dimer.

The protein resides in the cytoplasm. The catalysed reaction is tRNA(Ser) + L-serine + ATP = L-seryl-tRNA(Ser) + AMP + diphosphate + H(+). It catalyses the reaction tRNA(Sec) + L-serine + ATP = L-seryl-tRNA(Sec) + AMP + diphosphate + H(+). It functions in the pathway aminoacyl-tRNA biosynthesis; selenocysteinyl-tRNA(Sec) biosynthesis; L-seryl-tRNA(Sec) from L-serine and tRNA(Sec): step 1/1. Its function is as follows. Catalyzes the attachment of serine to tRNA(Ser). Is also able to aminoacylate tRNA(Sec) with serine, to form the misacylated tRNA L-seryl-tRNA(Sec), which will be further converted into selenocysteinyl-tRNA(Sec). The protein is Serine--tRNA ligase of Mycoplasma mobile (strain ATCC 43663 / 163K / NCTC 11711) (Mesomycoplasma mobile).